A 1571-amino-acid chain; its full sequence is Pentafunctional AROM polypeptide (1571 aa).

Residues 1–380 form a 3-dehydroquinate synthase region; sequence MTSVEKVSIL…YQLKAHQVSK (380 aa). NAD(+) is bound by residues 43 to 45, 81 to 84, 112 to 114, and Asp117; these read DTN, ENNK, and GGV. Arg128 provides a ligand contact to 7-phospho-2-dehydro-3-deoxy-D-arabino-heptonate. 137-138 contributes to the NAD(+) binding site; the sequence is TS. The 7-phospho-2-dehydro-3-deoxy-D-arabino-heptonate site is built by Asp144 and Lys150. Residue Lys159 coordinates NAD(+). Asn160 is a 7-phospho-2-dehydro-3-deoxy-D-arabino-heptonate binding site. Residues 177–180 and Asn188 each bind NAD(+); that span reads FLET. Glu192 contributes to the Zn(2+) binding site. 7-phospho-2-dehydro-3-deoxy-D-arabino-heptonate-binding positions include 192 to 195 and Lys244; that span reads EVVK. The active-site Proton acceptor; for 3-dehydroquinate synthase activity is the Glu254. Residues 258-262 and His265 contribute to the 7-phospho-2-dehydro-3-deoxy-D-arabino-heptonate site; that span reads RNLLN. His265 lines the Zn(2+) pocket. The Proton acceptor; for 3-dehydroquinate synthase activity role is filled by His269. 7-phospho-2-dehydro-3-deoxy-D-arabino-heptonate-binding residues include His281 and Lys352. His281 lines the Zn(2+) pocket. Residues 393-843 form an EPSP synthase region; that stretch reads VHPFDDKLIP…WDILHTKFKV (451 aa). Cys825 functions as the For EPSP synthase activity in the catalytic mechanism. The interval 868 to 1058 is shikimate kinase; that stretch reads KRSIIVIGMR…IPKKRSFYTS (191 aa). 875–882 contacts ATP; it reads GMRGAGKS. A 3-dehydroquinase region spans residues 1059 to 1271; sequence LTFSDLTEVA…GNEGALDVAQ (213 aa). Lys1204 functions as the Schiff-base intermediate with substrate; for 3-dehydroquinate dehydratase activity in the catalytic mechanism. Residues 1284–1571 form a shikimate dehydrogenase region; it reads EKHFWIVGNP…DVVHDAVVNQ (288 aa).

The protein in the N-terminal section; belongs to the sugar phosphate cyclases superfamily. Dehydroquinate synthase family. In the 2nd section; belongs to the EPSP synthase family. This sequence in the 3rd section; belongs to the shikimate kinase family. It in the 4th section; belongs to the type-I 3-dehydroquinase family. The protein in the C-terminal section; belongs to the shikimate dehydrogenase family. Homodimer. The cofactor is Zn(2+).

Its subcellular location is the cytoplasm. The enzyme catalyses 7-phospho-2-dehydro-3-deoxy-D-arabino-heptonate = 3-dehydroquinate + phosphate. It carries out the reaction 3-dehydroquinate = 3-dehydroshikimate + H2O. It catalyses the reaction shikimate + NADP(+) = 3-dehydroshikimate + NADPH + H(+). The catalysed reaction is shikimate + ATP = 3-phosphoshikimate + ADP + H(+). The enzyme catalyses 3-phosphoshikimate + phosphoenolpyruvate = 5-O-(1-carboxyvinyl)-3-phosphoshikimate + phosphate. Its pathway is metabolic intermediate biosynthesis; chorismate biosynthesis; chorismate from D-erythrose 4-phosphate and phosphoenolpyruvate: step 2/7. The protein operates within metabolic intermediate biosynthesis; chorismate biosynthesis; chorismate from D-erythrose 4-phosphate and phosphoenolpyruvate: step 3/7. It functions in the pathway metabolic intermediate biosynthesis; chorismate biosynthesis; chorismate from D-erythrose 4-phosphate and phosphoenolpyruvate: step 4/7. It participates in metabolic intermediate biosynthesis; chorismate biosynthesis; chorismate from D-erythrose 4-phosphate and phosphoenolpyruvate: step 5/7. Its pathway is metabolic intermediate biosynthesis; chorismate biosynthesis; chorismate from D-erythrose 4-phosphate and phosphoenolpyruvate: step 6/7. The AROM polypeptide catalyzes 5 consecutive enzymatic reactions in prechorismate polyaromatic amino acid biosynthesis. The protein is Pentafunctional AROM polypeptide of Scheffersomyces stipitis (strain ATCC 58785 / CBS 6054 / NBRC 10063 / NRRL Y-11545) (Yeast).